A 571-amino-acid chain; its full sequence is Leiomodin-3 (571 aa).

Disordered stretches follow at residues 1-29 (MSGHSRNSEQEDTLSEELDEDELLANLSP), 46-67 (PHLPVGMIQKDQTDKAPTGNFN), and 91-228 (PVSF…AKLD). The segment covering 10 to 23 (QEDTLSEELDEDEL) has biased composition (acidic residues). The segment covering 94-105 (FVQSEKNTQNQR) has biased composition (polar residues). A compositionally biased stretch (basic and acidic residues) spans 119–134 (LKEKLNSEILAKKRES). Residues 142 to 179 (EAEDDDEDEEEEEEDDEDEEEEEEDEEDDEGEEDEDGE) show a composition bias toward acidic residues. The segment covering 180-192 (QANREKNDAKEQI) has biased composition (basic and acidic residues). The segment covering 193–204 (HNNPGTYQQLAT) has biased composition (polar residues). Over residues 206–228 (TAHEQKDTSETKEKGEKKIAKLD) the composition is skewed to basic and acidic residues. A coiled-coil region spans residues 397–436 (VTNLLTRNQDKRRQKRQEEQQQQQLKEQRKLIAMLENGLG). Residues 545–564 (PRDQLLNDIRHSNVAYLKPV) enclose the WH2 domain.

Belongs to the tropomodulin family. As to quaternary structure, may interact with tropomyosin alpha (TPM1/2) N-terminus. Interacts with KLHL40; leading to stabilization. Post-translationally, ubiquitinated, leading to its degradation. Interaction with KLHL40 negatively regulates ubiquitination and degradation. As to expression, skeletal muscle and heart-specific (at protein level).

It localises to the cytoplasm. Its subcellular location is the myofibril. The protein resides in the sarcomere. The protein localises to the a band. It is found in the m line. It localises to the cytoskeleton. Functionally, essential for the organization of sarcomeric actin thin filaments in skeletal muscle. Increases the rate of actin polymerization. In Mus musculus (Mouse), this protein is Leiomodin-3.